The following is a 351-amino-acid chain: MFRALPFTATVHPYAITAPRLVVKMSAIATKNTRVESLEVKPPAHPTYDLKGVMQLALSEDAGNLGDVTCKATIPVDMESDAHFLAKEDGIIAGIALAEMIFAEVDPSLKVEWYVNDGDKVHKGLKFGKVQGNAYNIVIAERVVLNFMQRMSGIATLTKEMADAAHPAYILETRKTAPGLRLVDKWAVLIGGGKNHRMGLFDMVMIKDNHISAAGGVGKALKSVDQYLEQNKLQIGVEVETRTIAEVREVLEYASQTKTSLTRIMLDNMVVPLSNGDIDVSMLKEAVELINGRFDTEASGNVTLETVHKIGQTGVTYISSGALTHSVKALDISLKIDTELALEVGRRTKRA.

Substrate is bound by residues arginine 142, 173–175 (TRK), arginine 197, lysine 207, glutamate 240, aspartate 267, 299–301 (SGN), and 320–322 (SGA).

Belongs to the NadC/ModD family. As to expression, expressed in roots and flowers.

It is found in the mitochondrion. It catalyses the reaction nicotinate beta-D-ribonucleotide + CO2 + diphosphate = quinolinate + 5-phospho-alpha-D-ribose 1-diphosphate + 2 H(+). It functions in the pathway alkaloid biosynthesis; nicotine biosynthesis. Its pathway is cofactor biosynthesis; NAD(+) biosynthesis; nicotinate D-ribonucleotide from quinolinate: step 1/1. Functionally, involved in the biosynthesis of pyridine alkaloid natural products, leading mainly to the production of anabasine, anatabine, nicotine and nornicotine, effective deterrents against herbivores with antiparasitic and pesticide properties (neurotoxins); nornicotine serves as the precursor in the synthesis of the carcinogen compound N'-nitrosonornicotine (NNN). Involved in the catabolism of quinolinic acid (QA). The chain is Quinolinate phosphoribosyltransferase [decarboxylating] 2a, mitochondrial from Nicotiana tabacum (Common tobacco).